The following is a 382-amino-acid chain: Gap junction alpha-1 protein (382 aa).

Over 2 to 23 the chain is Cytoplasmic; that stretch reads GDWSALGKLLDKVQAYSTAGGK. Position 5 is a phosphoserine (S5). The chain crosses the membrane as a helical span at residues 24–44; that stretch reads VWLSVLFIFRILLLGTAVESA. Topologically, residues 45–76 are extracellular; that stretch reads WGDEQSAFRCNTQQPGCENVCYDKSFPISHVR. 2 disulfide bridges follow: C54–C192 and C187–C198. The helical transmembrane segment at 77–97 threads the bilayer; sequence FWVLQIIFVSVPTLLYLAHVF. Residues 98 to 155 lie on the Cytoplasmic side of the membrane; that stretch reads YVMRKEEKLNKKEEELKVAQTDGVNVEMHLKQIEIKKFKYGIEEHGKVKMRGGLLRTY. K144 participates in a covalent cross-link: Glycyl lysine isopeptide (Lys-Gly) (interchain with G-Cter in SUMO). Residues 156–176 form a helical membrane-spanning segment; that stretch reads IISILFKSVFEVAFLLIQWYI. Over 177-207 the chain is Extracellular; sequence YGFSLSAVYTCKRDPCPHQVDCFLSRPTEKT. The helical transmembrane segment at 208–228 threads the bilayer; that stretch reads IFIIFMLVVSLVSLALNIIEL. At 229-382 the chain is on the cytoplasmic side; the sequence is FYVFFKGVKD…SRPRPDDLEI (154 aa). A Glycyl lysine isopeptide (Lys-Gly) (interchain with G-Cter in SUMO) cross-link involves residue K237. The tract at residues 244 to 382 is interaction with NOV; that stretch reads SDPYHATTGP…SRPRPDDLEI (139 aa). Y247 is modified (phosphotyrosine). S255, S257, and S262 each carry phosphoserine. Residues 264 to 382 form an interaction with UBQLN4 region; it reads KYAYFNGCSS…SRPRPDDLEI (119 aa). S-nitrosocysteine is present on C271. Residue T275 is modified to Phosphothreonine. Residues S306 and S314 each carry the phosphoserine modification. Positions 317–332 are enriched in polar residues; sequence QNRMGQAGSTISNSHA. The interval 317 to 382 is disordered; it reads QNRMGQAGST…SRPRPDDLEI (66 aa). At S325 the chain carries Phosphoserine; by CK1. A Phosphothreonine modification is found at T326. Phosphoserine; by CK1 occurs at positions 328 and 330. A phosphoserine mark is found at S344 and S365. Residues 362-374 are compositionally biased toward low complexity; the sequence is RPSSRASSRASSR. S368 bears the Phosphoserine; by PKC/PRKCG and PKC/PRKCD mark. 2 positions are modified to phosphoserine: S369 and S373.

Belongs to the connexin family. Alpha-type (group II) subfamily. A connexon is composed of a hexamer of connexins. Interacts with SGSM3. Interacts with RIC1/CIP150. Interacts with CNST and CSNK1D. Interacts (via C-terminus) with TJP1. Interacts (via C-terminus) with SRC (via SH3 domain). Interacts (not ubiquitinated) with UBQLN4 (via UBA domain). Interacts with NOV. Interacts with TMEM65. Interacts with ANK3/ANKG and PKP2. Phosphorylation at Ser-325, Ser-328 and Ser-330 by CK1 modulates gap junction assembly. Phosphorylated at Ser-368 by PRKCG; phosphorylation induces disassembly of gap junction plaques and inhibition of gap junction activity. Phosphorylation at Ser-368 by PRKCD triggers its internalization into small vesicles leading to proteasome-mediated degradation. Post-translationally, sumoylated with SUMO1, SUMO2 and SUMO3, which may regulate the level of functional Cx43 gap junctions at the plasma membrane. May be desumoylated by SENP1 or SENP2. In terms of processing, S-nitrosylation at Cys-271 is enriched at the muscle endothelial gap junction in arteries, it augments channel permeability and may regulate of smooth muscle cell to endothelial cell communication. Acetylated in the developing cortex; leading to delocalization from the cell membrane.

The protein localises to the cell membrane. It localises to the cell junction. The protein resides in the gap junction. Its subcellular location is the endoplasmic reticulum. Functionally, gap junction protein that acts as a regulator of bladder capacity. A gap junction consists of a cluster of closely packed pairs of transmembrane channels, the connexons, through which materials of low MW diffuse from one cell to a neighboring cell. May play a critical role in the physiology of hearing by participating in the recycling of potassium to the cochlear endolymph. Negative regulator of bladder functional capacity: acts by enhancing intercellular electrical and chemical transmission, thus sensitizing bladder muscles to cholinergic neural stimuli and causing them to contract. May play a role in cell growth inhibition through the regulation of NOV expression and localization. Plays an essential role in gap junction communication in the ventricles. This Ursus americanus (American black bear) protein is Gap junction alpha-1 protein (GJA1).